An 800-amino-acid chain; its full sequence is Nucleolar RNA helicase 2-B (800 aa).

The segment covering 1–14 has biased composition (basic and acidic residues); sequence MPGKVYTDEMEGKS. The tract at residues 1 to 200 is disordered; that stretch reads MPGKVYTDEM…TDTSEITAAN (200 aa). Polar residues predominate over residues 114–124; the sequence is ETNISLSSQGG. A Q motif motif is present at residues 221–249; the sequence is GDFSKFPISKDTIKNLQAKGVTYLFPIQS. The Helicase ATP-binding domain maps to 252 to 431; that stretch reads FHTVYSGKDV…KKYMRKQYEK (180 aa). 265 to 272 is a binding site for ATP; the sequence is ARTGTGKT. Positions 374-377 match the DEAD box motif; that stretch reads DEVD. Residues 464-620 enclose the Helicase C-terminal domain; it reads DIVQVYSGSH…SSADAIKSLD (157 aa). The tract at residues 750–800 is disordered; sequence IQESERSFDGPRNRSFGGRGRRPFDRRNNSRNSSGGGGGRRGRSGGFRRGR. Residues 752–761 show a composition bias toward basic and acidic residues; the sequence is ESERSFDGPR. A compositionally biased stretch (basic residues) spans 789–800; it reads RRGRSGGFRRGR.

This sequence belongs to the DEAD box helicase family. DDX21/DDX50 subfamily. As to expression, widely expressed. Expressed at higher level in stomach. Expressed at lower level compared to ddx21-a.

Its subcellular location is the nucleus. The protein localises to the nucleolus. It localises to the nucleoplasm. It is found in the cytoplasm. The protein resides in the cytosol. Its subcellular location is the mitochondrion. The enzyme catalyses ATP + H2O = ADP + phosphate + H(+). Its function is as follows. RNA helicase that acts as a sensor of the transcriptional status of both RNA polymerase (Pol) I and II: promotes ribosomal RNA (rRNA) processing and transcription from polymerase II (Pol II). Binds various RNAs, such as rRNAs, snoRNAs, 7SK and, at lower extent, mRNAs. In the nucleolus, localizes to rDNA locus, where it directly binds rRNAs and snoRNAs, and promotes rRNA transcription, processing and modification. Required for rRNA 2'-O-methylation, possibly by promoting the recruitment of late-acting snoRNAs SNORD56 and SNORD58 with pre-ribosomal complexes. In the nucleoplasm, binds 7SK RNA and is recruited to the promoters of Pol II-transcribed genes: acts by facilitating the release of P-TEFb from inhibitory 7SK snRNP in a manner that is dependent on its helicase activity, thereby promoting transcription of its target genes. Required to prevent R-loop-associated DNA damage and transcription-associated genomic instability. The protein is Nucleolar RNA helicase 2-B (ddx21-b) of Xenopus laevis (African clawed frog).